Here is a 370-residue protein sequence, read N- to C-terminus: 4-hydroxy-3-methylbut-2-en-1-yl diphosphate synthase (flavodoxin) (370 aa).

Positions 265, 268, 300, and 307 each coordinate [4Fe-4S] cluster.

This sequence belongs to the IspG family. It depends on [4Fe-4S] cluster as a cofactor.

The enzyme catalyses (2E)-4-hydroxy-3-methylbut-2-enyl diphosphate + oxidized [flavodoxin] + H2O + 2 H(+) = 2-C-methyl-D-erythritol 2,4-cyclic diphosphate + reduced [flavodoxin]. It functions in the pathway isoprenoid biosynthesis; isopentenyl diphosphate biosynthesis via DXP pathway; isopentenyl diphosphate from 1-deoxy-D-xylulose 5-phosphate: step 5/6. Its function is as follows. Converts 2C-methyl-D-erythritol 2,4-cyclodiphosphate (ME-2,4cPP) into 1-hydroxy-2-methyl-2-(E)-butenyl 4-diphosphate. The chain is 4-hydroxy-3-methylbut-2-en-1-yl diphosphate synthase (flavodoxin) from Symbiobacterium thermophilum (strain DSM 24528 / JCM 14929 / IAM 14863 / T).